Consider the following 272-residue polypeptide: Cytosolic Fe-S cluster assembly factor NUBP2 (272 aa).

23-30 (GKGGVGKS) serves as a coordination point for ATP. The [4Fe-4S] cluster site is built by Cys197 and Cys200.

Belongs to the Mrp/NBP35 ATP-binding proteins family. NUBP2/CFD1 subfamily. In terms of assembly, heterotetramer of 2 NUBP1 and 2 NUBP2 chains. The cofactor is [4Fe-4S] cluster.

It localises to the cytoplasm. Its function is as follows. Component of the cytosolic iron-sulfur (Fe/S) protein assembly (CIA) machinery. Required for maturation of extramitochondrial Fe-S proteins. The NUBP1-NUBP2 heterotetramer forms a Fe-S scaffold complex, mediating the de novo assembly of an Fe-S cluster and its transfer to target apoproteins. The polypeptide is Cytosolic Fe-S cluster assembly factor NUBP2 (Gallus gallus (Chicken)).